We begin with the raw amino-acid sequence, 105 residues long: Large ribosomal subunit protein uL24 (105 aa).

The protein belongs to the universal ribosomal protein uL24 family. In terms of assembly, part of the 50S ribosomal subunit.

One of two assembly initiator proteins, it binds directly to the 5'-end of the 23S rRNA, where it nucleates assembly of the 50S subunit. Functionally, one of the proteins that surrounds the polypeptide exit tunnel on the outside of the subunit. This chain is Large ribosomal subunit protein uL24, found in Xanthomonas axonopodis pv. citri (strain 306).